The sequence spans 413 residues: ORC1-type DNA replication protein 2 (413 aa).

ATP contacts are provided by residues 70–74 (TGKTA), Tyr217, and Arg229.

This sequence belongs to the CDC6/cdc18 family. Monomer. Interacts with Cdc6-3, MCM and PolB1. In terms of processing, autophosphorylated in vitro.

Functionally, involved in regulation of DNA replication. May play essential roles in origin recognition and cell cycle control of replication. Binds both single-stranded and double-stranded DNA, with a preference for molecules that contain a bubble, a fork, or a tail. Has a weak ATPase activity. Stimulates the binding of the MCM helicase to the origin DNA, but strongly inhibits ATPase and DNA helicase activities of MCM. Also regulates the DNA polymerase and the nuclease activities of PolB1. In Saccharolobus solfataricus (strain ATCC 35092 / DSM 1617 / JCM 11322 / P2) (Sulfolobus solfataricus), this protein is ORC1-type DNA replication protein 2 (cdc6-2).